The sequence spans 976 residues: Vacuolar membrane protease (976 aa).

Topologically, residues methionine 1–lysine 15 are cytoplasmic. The chain crosses the membrane as a helical span at residues threonine 16 to aspartate 36. Residues histidine 37–leucine 359 lie on the Vacuolar side of the membrane. Residues asparagine 96 and asparagine 121 are each glycosylated (N-linked (GlcNAc...) asparagine). The Zn(2+) site is built by histidine 156 and aspartate 168. The N-linked (GlcNAc...) asparagine glycan is linked to asparagine 189. Glutamate 200 functions as the Proton acceptor in the catalytic mechanism. Glutamate 201 is a Zn(2+) binding site. Residues asparagine 212 and asparagine 217 are each glycosylated (N-linked (GlcNAc...) asparagine). Zn(2+)-binding residues include glutamate 226 and histidine 300. The helical transmembrane segment at phenylalanine 360–isoleucine 380 threads the bilayer. Topologically, residues serine 381–tryptophan 392 are cytoplasmic. Residues leucine 393–phenylalanine 412 form a helical membrane-spanning segment. The Vacuolar segment spans residues serine 413–tyrosine 428. Residues phenylalanine 429–cysteine 449 traverse the membrane as a helical segment. The Cytoplasmic segment spans residues serine 450–serine 461. The chain crosses the membrane as a helical span at residues leucine 462–leucine 482. The Vacuolar segment spans residues tyrosine 483 to serine 496. Residues isoleucine 497–methionine 517 traverse the membrane as a helical segment. Residues arginine 518 to tyrosine 627 are Cytoplasmic-facing. The interval arginine 528–glutamate 610 is disordered. The segment covering asparagine 549–threonine 558 has biased composition (polar residues). Positions serine 559 to aspartate 570 are enriched in low complexity. The span at asparagine 582–proline 601 shows a compositional bias: basic and acidic residues. Residues alanine 628 to valine 648 traverse the membrane as a helical segment. Over aspartate 649 to aspartate 668 the chain is Vacuolar. A glycan (N-linked (GlcNAc...) asparagine) is linked at asparagine 656. The helical transmembrane segment at valine 669–tyrosine 689 threads the bilayer. Topologically, residues lysine 690–asparagine 692 are cytoplasmic. Residues tyrosine 693–valine 713 form a helical membrane-spanning segment. The Vacuolar portion of the chain corresponds to histidine 714–leucine 976. N-linked (GlcNAc...) asparagine glycans are attached at residues asparagine 768, asparagine 796, asparagine 811, asparagine 866, and asparagine 937.

Belongs to the peptidase M28 family. Requires Zn(2+) as cofactor.

Its subcellular location is the vacuole membrane. May be involved in vacuolar sorting and osmoregulation. In Saccharomyces cerevisiae (strain AWRI1631) (Baker's yeast), this protein is Vacuolar membrane protease.